The sequence spans 205 residues: Large ribosomal subunit protein uL3 (205 aa).

The protein belongs to the universal ribosomal protein uL3 family. As to quaternary structure, part of the 50S ribosomal subunit. Forms a cluster with proteins L14 and L19.

One of the primary rRNA binding proteins, it binds directly near the 3'-end of the 23S rRNA, where it nucleates assembly of the 50S subunit. This is Large ribosomal subunit protein uL3 from Parabacteroides distasonis (strain ATCC 8503 / DSM 20701 / CIP 104284 / JCM 5825 / NCTC 11152).